Consider the following 355-residue polypeptide: dTDP-D-glucose 4,6-dehydratase (355 aa).

Residue T142 participates in substrate binding. D143 acts as the Proton donor in catalysis. Active-site proton acceptor residues include E144 and Y166.

This sequence belongs to the NAD(P)-dependent epimerase/dehydratase family. dTDP-glucose dehydratase subfamily. Requires NAD(+) as cofactor.

The enzyme catalyses dTDP-alpha-D-glucose = dTDP-4-dehydro-6-deoxy-alpha-D-glucose + H2O. The polypeptide is dTDP-D-glucose 4,6-dehydratase (TGDS) (Bos taurus (Bovine)).